The following is a 227-amino-acid chain: MKATYHGHSVVHIETNGYHIWIDPFLNGNKHTDIKPQDVKADVILLTHGHGDHIGDTIEIAKNNDALVIAPFELATYLGWQGVKTHPLSIGGGREFEFGKVKLTQAFHGSAIIDEDAKTITYTGMPSGILFTAEGKTIYHAGDTALFSDMKLIGELNHIELAFLPIGDNFTMGPDDARIAAEWLRAKQVVPVHYSTFPPIEQDPHAFADSLHGGVGHVLNSGQSIEI.

Belongs to the UPF0173 family.

This Bacillus pumilus (strain SAFR-032) protein is UPF0173 metal-dependent hydrolase BPUM_2573.